The chain runs to 76 residues: MEDMAKKDGVIEIEGVVTEALPNAMFRVELTNKHIVLAHISGKMRQHYIRILPEDRVVVELSPYDLTRGRIVYRYK.

The S1-like domain maps to 1–76 (MEDMAKKDGV…TRGRIVYRYK (76 aa)).

The protein belongs to the IF-1 family. As to quaternary structure, component of the 30S ribosomal translation pre-initiation complex which assembles on the 30S ribosome in the order IF-2 and IF-3, IF-1 and N-formylmethionyl-tRNA(fMet); mRNA recruitment can occur at any time during PIC assembly.

It localises to the cytoplasm. Functionally, one of the essential components for the initiation of protein synthesis. Stabilizes the binding of IF-2 and IF-3 on the 30S subunit to which N-formylmethionyl-tRNA(fMet) subsequently binds. Helps modulate mRNA selection, yielding the 30S pre-initiation complex (PIC). Upon addition of the 50S ribosomal subunit IF-1, IF-2 and IF-3 are released leaving the mature 70S translation initiation complex. The polypeptide is Translation initiation factor IF-1 (Renibacterium salmoninarum (strain ATCC 33209 / DSM 20767 / JCM 11484 / NBRC 15589 / NCIMB 2235)).